The primary structure comprises 175 residues: Austinoid biosynthesis cluster protein F (175 aa).

It belongs to the trt14 isomerase family. In terms of assembly, homodimer.

Its pathway is secondary metabolite biosynthesis; terpenoid biosynthesis. Functionally, part of the gene cluster that mediates the biosynthesis of calidodehydroaustin, a fungal meroterpenoid. The first step of the pathway is the synthesis of 3,5-dimethylorsellinic acid by the polyketide synthase ausA. 3,5-dimethylorsellinic acid is then prenylated by the polyprenyl transferase ausN. Further epoxidation by the FAD-dependent monooxygenase ausM and cyclization by the probable terpene cyclase ausL lead to the formation of protoaustinoid A. Protoaustinoid A is then oxidized to spiro-lactone preaustinoid A3 by the combined action of the FAD-binding monooxygenases ausB and ausC, and the dioxygenase ausE. Acid-catalyzed keto-rearrangement and ring contraction of the tetraketide portion of preaustinoid A3 by ausJ lead to the formation of preaustinoid A4. The aldo-keto reductase ausK, with the help of ausH, is involved in the next step by transforming preaustinoid A4 into isoaustinone which is in turn hydroxylated by the P450 monooxygenase ausI to form austinolide. The cytochrome P450 monooxygenase ausG modifies austinolide to austinol. Austinol is further acetylated to austin by the O-acetyltransferase ausP, which spontaneously changes to dehydroaustin. The cytochrome P450 monooxygenase ausR then converts dehydroaustin is into 7-dehydrodehydroaustin. The hydroxylation catalyzed by ausR permits the O-acetyltransferase ausQ to add an additional acetyl group to the molecule, leading to the formation of acetoxydehydroaustin. The short chain dehydrogenase ausT catalyzes the reduction of the double bond present between carbon atoms 1 and 2 to convert 7-dehydrodehydroaustin into 1,2-dihydro-7-hydroxydehydroaustin. AusQ catalyzes not only an acetylation reaction but also the addition of the PKS ausV diketide product to 1,2-dihydro-7-hydroxydehydroaustin, forming precalidodehydroaustin. Finally, the iron/alpha-ketoglutarate-dependent dioxygenase converts precalidodehydroaustin into calidodehydroaustin. The protein is Austinoid biosynthesis cluster protein F of Aspergillus calidoustus.